A 422-amino-acid polypeptide reads, in one-letter code: MMFEFLSLLCSGFFLVQRMSAHMGSYDKPFLCASPSYIVPQGQNVTLICDSHSKPNIFKVYKEDGFPILQLHEKTFTKSLDIGPVTPEYAGTYRCFHHQYPNEISAHSEPLKIIISGIYMKPFLIAPQTPLANSGENVTLECHSEIMFDTYILTSHRMEILKETLQHFQESHFSGSYASFTIGPMTPDHSGTYTCYGAYNHSLYEWSDSSDPVDIKITGEYKKPSLSSVMSPVLVSEQNMTLSCISNHQFEMFHLSREGVPQGKGIPAMQSHSGKFEAKFLLSPVIQKGNYRCYGSFKNSSHVWSSPSDPLYLPAKDNLKNLHIQIGLLVTMVLVIVVIIIIIIIIIIIIYYYYFSKKSSILEQESEVKATINRQDPERQEEHKVTYIEFEQRIFNKNLMPPISQSPKEFSIDTVVYTEVMI.

An N-terminal signal peptide occupies residues 1 to 21 (MMFEFLSLLCSGFFLVQRMSA). At 22-329 (HMGSYDKPFL…KNLHIQIGLL (308 aa)) the chain is on the extracellular side. 3 Ig-like C2-type domains span residues 42 to 100 (GQNV…HHQY), 135 to 202 (GENV…YNHS), and 237 to 300 (EQNM…FKNS). The N-linked (GlcNAc...) asparagine glycan is linked to Asn-44. Cys-49 and Cys-95 form a disulfide bridge. Asn-137 carries N-linked (GlcNAc...) asparagine glycosylation. Cys-142 and Cys-195 are oxidised to a cystine. N-linked (GlcNAc...) asparagine glycans are attached at residues Asn-200 and Asn-239. Cysteines 244 and 293 form a disulfide. Asn-299 carries N-linked (GlcNAc...) asparagine glycosylation. The chain crosses the membrane as a helical span at residues 330–350 (VTMVLVIVVIIIIIIIIIIII). Over 351-422 (YYYYFSKKSS…DTVVYTEVMI (72 aa)) the chain is Cytoplasmic.

Belongs to the immunoglobulin superfamily.

The protein localises to the cell membrane. Functionally, receptor on natural killer (NK) cells. Inhibits the activity of NK cells thus preventing cell lysis. This Rattus norvegicus (Rat) protein is Killer cell immunoglobulin-like receptor 3DL1 (Kir3dl1).